A 155-amino-acid polypeptide reads, in one-letter code: Deoxyuridine 5'-triphosphate nucleotidohydrolase (155 aa).

Substrate is bound by residues 74–76, N87, and 91–93; these read RSG and TID.

It belongs to the dUTPase family. It depends on Mg(2+) as a cofactor.

It catalyses the reaction dUTP + H2O = dUMP + diphosphate + H(+). It participates in pyrimidine metabolism; dUMP biosynthesis; dUMP from dCTP (dUTP route): step 2/2. Functionally, this enzyme is involved in nucleotide metabolism: it produces dUMP, the immediate precursor of thymidine nucleotides and it decreases the intracellular concentration of dUTP so that uracil cannot be incorporated into DNA. The polypeptide is Deoxyuridine 5'-triphosphate nucleotidohydrolase (Cereibacter sphaeroides (strain KD131 / KCTC 12085) (Rhodobacter sphaeroides)).